The chain runs to 219 residues: Orotate phosphoribosyltransferase (219 aa).

Lys26 provides a ligand contact to 5-phospho-alpha-D-ribose 1-diphosphate. 34–35 contributes to the orotate binding site; the sequence is FF. 5-phospho-alpha-D-ribose 1-diphosphate is bound by residues 72–73, Arg98, Lys99, Lys102, His104, and 124–132; these read YK and DDVITAGTA. Residues Thr128 and Arg156 each coordinate orotate.

It belongs to the purine/pyrimidine phosphoribosyltransferase family. PyrE subfamily. In terms of assembly, homodimer. Requires Mg(2+) as cofactor.

It catalyses the reaction orotidine 5'-phosphate + diphosphate = orotate + 5-phospho-alpha-D-ribose 1-diphosphate. It functions in the pathway pyrimidine metabolism; UMP biosynthesis via de novo pathway; UMP from orotate: step 1/2. Catalyzes the transfer of a ribosyl phosphate group from 5-phosphoribose 1-diphosphate to orotate, leading to the formation of orotidine monophosphate (OMP). The chain is Orotate phosphoribosyltransferase from Stenotrophomonas maltophilia (strain R551-3).